We begin with the raw amino-acid sequence, 734 residues long: Cell surface glycoprotein gp138B (734 aa).

Residues 1–20 form the signal peptide; sequence MKIILTLSIFLICFLQLGQS. N-linked (GlcNAc...) asparagine glycans are attached at residues N58, N89, N124, N198, N224, N392, N420, N435, N482, N498, N523, N596, N605, N614, N621, and N630. The IPT/TIG domain maps to 504-592; sequence PFIKSYGFLE…SSNEVTFYYF (89 aa). Positions 678-712 are disordered; it reads GETPTPSTTPSTTPSTTPSTTPSSTPTQSPGDDGS. Residues 680-712 show a composition bias toward low complexity; the sequence is TPTPSTTPSTTPSTTPSTTPSSTPTQSPGDDGS. 4 consecutive repeat copies span residues 683–686, 687–690, 691–694, and 695–698. The segment at 683 to 698 is 4 X 4 AA tandem repeats of P-S-T-T; sequence PSTTPSTTPSTTPSTT. G708 is lipidated: GPI-like-anchor amidated glycine. A propeptide spans 709 to 734 (removed in mature form); that stretch reads DDGSTSSTLSISFYLITLLLLTQQFI.

In terms of processing, the sugar chains may play important roles in cell fusion. The GPI-like-anchor contains a phosphoceramide group, rather than a phosphatidyl group.

The protein resides in the cell membrane. Involved in the sexual cell fusion of D.discoideum. The sequence is that of Cell surface glycoprotein gp138B (GP138B) from Dictyostelium discoideum (Social amoeba).